The sequence spans 245 residues: 1-(5-phosphoribosyl)-5-[(5-phosphoribosylamino)methylideneamino] imidazole-4-carboxamide isomerase (245 aa).

The active-site Proton acceptor is Asp-8. The active-site Proton donor is the Asp-129.

Belongs to the HisA/HisF family.

The protein localises to the cytoplasm. It carries out the reaction 1-(5-phospho-beta-D-ribosyl)-5-[(5-phospho-beta-D-ribosylamino)methylideneamino]imidazole-4-carboxamide = 5-[(5-phospho-1-deoxy-D-ribulos-1-ylimino)methylamino]-1-(5-phospho-beta-D-ribosyl)imidazole-4-carboxamide. It participates in amino-acid biosynthesis; L-histidine biosynthesis; L-histidine from 5-phospho-alpha-D-ribose 1-diphosphate: step 4/9. The protein is 1-(5-phosphoribosyl)-5-[(5-phosphoribosylamino)methylideneamino] imidazole-4-carboxamide isomerase of Rhodopseudomonas palustris (strain ATCC BAA-98 / CGA009).